The sequence spans 179 residues: Ribosome-recycling factor (179 aa).

This sequence belongs to the RRF family.

It localises to the cytoplasm. Its function is as follows. Responsible for the release of ribosomes from messenger RNA at the termination of protein biosynthesis. May increase the efficiency of translation by recycling ribosomes from one round of translation to another. In Chlamydia trachomatis serovar L2b (strain UCH-1/proctitis), this protein is Ribosome-recycling factor.